A 197-amino-acid chain; its full sequence is Putative ankyrin repeat protein R875 (197 aa).

ANK repeat units follow at residues 78–106, 107–136, 138–166, and 168–196; these read LNKC…DIRE, NDDC…DIRA, DDDA…NFRK, and NDYE…VLHE.

This Acanthamoeba polyphaga mimivirus (APMV) protein is Putative ankyrin repeat protein R875.